The following is a 411-amino-acid chain: Putative competence-damage inducible protein (411 aa).

It belongs to the CinA family.

In Caldicellulosiruptor bescii (strain ATCC BAA-1888 / DSM 6725 / KCTC 15123 / Z-1320) (Anaerocellum thermophilum), this protein is Putative competence-damage inducible protein.